The following is a 410-amino-acid chain: MFPGSGRQTYQQQGYPPPQGAPQYNYGPPQGPPQGYYNGPPQGYNGPPQGPPPQNYNYGHYGPPQGQGQGYGQGGPAPQMYNNNRQSGAMNDVSTAPQRFGNTDMTYQLSNCSGRKKALLVGINYFGSSNELRGCVNDIKNMSNFLNRRFGYSYDDMVILTDDQNQRNKIPTKENIIRAMQWLVKDARPNDSLVFHYSGHGGITKDLDGDEDEGYDEVIYPVDFQQAGHIVDDDMHAIMVRPLPPGCKLTALFDSCHSGTALDLPFVYSTKGVVKEPNLWKDAGTDAFGAFMQYERGNIGGAISSIGGLLKKVTNSSSSNRQQVINIKASPADVISISGCKDDQTSADASINNNATGAMSWAFIKTMTDMPEQSYLSLLNNMRTLLKEKYSQKPQLSSSHPQDMNIRFIM.

The interval 1-94 (MFPGSGRQTY…RQSGAMNDVS (94 aa)) is disordered. 2 stretches are compositionally biased toward low complexity: residues 21–47 (APQYNYGPPQGPPQGYYNGPPQGYNGP) and 55–64 (NYNYGHYGPP). Positions 65–75 (QGQGQGYGQGG) are enriched in gly residues. The segment covering 80–94 (MYNNNRQSGAMNDVS) has biased composition (polar residues). Residues His-200 and Cys-256 contribute to the active site.

It belongs to the peptidase C14B family.

In terms of biological role, involved in cell death (apoptosis). The polypeptide is Metacaspase-1 (MCA1) (Meyerozyma guilliermondii (strain ATCC 6260 / CBS 566 / DSM 6381 / JCM 1539 / NBRC 10279 / NRRL Y-324) (Yeast)).